Reading from the N-terminus, the 197-residue chain is UPF0314 protein NGR_c32320 (197 aa).

The next 3 helical transmembrane spans lie at 16–36 (WIWL…QHLM), 66–86 (WYTP…YLLL), and 152–172 (LPVA…GWII).

The protein belongs to the UPF0314 family.

It localises to the cell membrane. The protein is UPF0314 protein NGR_c32320 of Sinorhizobium fredii (strain NBRC 101917 / NGR234).